We begin with the raw amino-acid sequence, 513 residues long: Cytochrome P450 monooxygenase orf3 (513 aa).

A helical transmembrane segment spans residues 11–31 (LVALGLIAATIIIYSFTLTVY). 2 N-linked (GlcNAc...) asparagine glycosylation sites follow: N211 and N351. Residue C455 coordinates heme.

The protein belongs to the cytochrome P450 family. The cofactor is heme.

The protein resides in the membrane. Its pathway is mycotoxin biosynthesis. Cytochrome P450 monooxygenase; part of the gene cluster that mediates the biosynthesis of brefeldin A (BFA), a protein transport inhibitor that shows antiviral, antifungal, and antitumor properties. The proposed biosynthesis of BFA involves formation of an acyclic polyketide chain that is differentially tailored throughout the backbone. The highly reducing polyketide synthase Bref-PKS is proposed to synthesize the precisely reduced octaketide precursor, which could then be directly offloaded by the thiohydrolase enzyme Bref-TH followed by a cytochrome P450 monooxygenase-mediated formation of the cyclopentane ring and macrocyclization to afford 7-deoxy BFA. Alternatively, the first ring annulation can also occur on the ACP-tethered intermediate before the thiohydrolase release and lactonization. The C7-hydroxylation by another cytochrome P450 monooxygenase is believed to be the final step in the process to obtain the final structure of BFA. In addition to the HRPKS Bref-PKS and the thiohydrolase Bref-TH, the brefeldin A biosynthesis cluster contains 4 cytochrome p450 monooxygenases (called orf3 to orf6), as well a the probable cluster-specific transcription regulator orf8. The chain is Cytochrome P450 monooxygenase orf3 from Eupenicillium brefeldianum (Penicillium brefeldianum).